The sequence spans 563 residues: Probable Xaa-Pro aminopeptidase PEPP (563 aa).

Positions 331, 342, 491, and 532 each coordinate Mn(2+).

Belongs to the peptidase M24B family. Requires Mn(2+) as cofactor.

The enzyme catalyses Release of any N-terminal amino acid, including proline, that is linked to proline, even from a dipeptide or tripeptide.. Catalyzes the removal of a penultimate prolyl residue from the N-termini of peptides. The polypeptide is Probable Xaa-Pro aminopeptidase PEPP (PEPP) (Verticillium alfalfae (strain VaMs.102 / ATCC MYA-4576 / FGSC 10136) (Verticillium wilt of alfalfa)).